The chain runs to 288 residues: Protein CREG2 (288 aa).

The N-terminal stretch at 1-31 is a signal peptide; that stretch reads MSLSGRERPAWPGSRLSWLLCCSALLSPAAG. A disordered region spans residues 78-100; that stretch reads AHKEDTHLRPRGSARARPAPAAR. The N-linked (GlcNAc...) asparagine glycan is linked to N164.

It belongs to the CREG family. As to expression, brain specific.

The protein resides in the secreted. The protein is Protein CREG2 (Creg2) of Mus musculus (Mouse).